A 185-amino-acid polypeptide reads, in one-letter code: Ribosome-recycling factor (185 aa).

Belongs to the RRF family.

Its subcellular location is the cytoplasm. Functionally, responsible for the release of ribosomes from messenger RNA at the termination of protein biosynthesis. May increase the efficiency of translation by recycling ribosomes from one round of translation to another. The sequence is that of Ribosome-recycling factor from Yersinia pseudotuberculosis serotype O:1b (strain IP 31758).